The following is a 188-amino-acid chain: dCTP deaminase (188 aa).

DCTP-binding positions include 111-116, 135-137, Gln156, Tyr170, and Gln180; these read KSTYAR and VLE. Glu137 acts as the Proton donor/acceptor in catalysis.

This sequence belongs to the dCTP deaminase family. In terms of assembly, homotrimer.

It catalyses the reaction dCTP + H2O + H(+) = dUTP + NH4(+). It participates in pyrimidine metabolism; dUMP biosynthesis; dUMP from dCTP (dUTP route): step 1/2. Its function is as follows. Catalyzes the deamination of dCTP to dUTP. This Protochlamydia amoebophila (strain UWE25) protein is dCTP deaminase.